Here is a 202-residue protein sequence, read N- to C-terminus: Small ribosomal subunit protein uS4c (202 aa).

The segment at 18–45 is disordered; that stretch reads LPGLTRKMAKRKSPPGQHGAASKKPSQY. The S4 RNA-binding domain maps to 90 to 152; sequence MRLDTTIFRL…SRSRKLIEGY (63 aa).

Belongs to the universal ribosomal protein uS4 family. Part of the 30S ribosomal subunit. Contacts protein S5. The interaction surface between S4 and S5 is involved in control of translational fidelity.

The protein localises to the plastid. It is found in the chloroplast. In terms of biological role, one of the primary rRNA binding proteins, it binds directly to 16S rRNA where it nucleates assembly of the body of the 30S subunit. Its function is as follows. With S5 and S12 plays an important role in translational accuracy. The protein is Small ribosomal subunit protein uS4c (rps4) of Nephroselmis olivacea (Green alga).